A 32-amino-acid chain; its full sequence is MSDIN-like toxin proprotein 1 (32 aa).

Positions 1–10 (MSDINATRLP) are excised as a propeptide. The cyclopeptide (Ile-Pro) cross-link spans 11-18 (IFWFIYFP). Positions 19-32 (CVSDVDSTLTRGER) are excised as a propeptide.

It belongs to the MSDIN fungal toxin family. Processed by the macrocyclase-peptidase enzyme POPB to yield a toxic cyclic octapeptide. POPB first removes 10 residues from the N-terminus. Conformational trapping of the remaining peptide forces the enzyme to release this intermediate rather than proceed to macrocyclization. The enzyme rebinds the remaining peptide in a different conformation and catalyzes macrocyclization of the N-terminal 8 residues. As to expression, expressed in basidiocarps.

Functionally, probable toxin that belongs to the MSDIN-like toxin family responsible for a large number of food poisoning cases and deaths. The sequence is that of MSDIN-like toxin proprotein 1 from Amanita exitialis (Guangzhou destroying angel).